Consider the following 808-residue polypeptide: Disks large-associated protein 5 (808 aa).

Phosphoserine occurs at positions 66 and 70. Residues 88–119 adopt a coiled-coil conformation; that stretch reads QRKQLLQKYKEEKQLQKLKEQREKAKRGVFKV. The disordered stretch occupies residues 134-282; the sequence is QRGAKAEPEK…QTRETSEMGP (149 aa). Basic and acidic residues-rich tracts occupy residues 135-145 and 180-193; these read RGAKAEPEKAF and QTSEKQPLDRERKV. Residue Ser-201 is modified to Phosphoserine. Basic and acidic residues-rich tracts occupy residues 232–241 and 249–278; these read TNEKGSERMR and KKPEGKPDKVIPSKVERDEKHLDSQTRETS. Ser-328 is subject to Phosphoserine. 2 positions are modified to phosphothreonine: Thr-337 and Thr-386. The tract at residues 377–413 is disordered; the sequence is HVLNQKGASTSDSNHASVKGVPCSEGSEGQTSQPPHD. Over residues 382–392 the composition is skewed to polar residues; that stretch reads KGASTSDSNHA. At Ser-598 the chain carries Phosphoserine. The residue at position 607 (Ser-607) is a Phosphoserine; by AURKA. Ser-612 is subject to Phosphoserine. The residue at position 617 (Thr-617) is a Phosphothreonine. Ser-620 is modified (phosphoserine). Positions 629 to 654 are disordered; that stretch reads RAAGDLLRQKMPLKKPDPQSSKSEHV. Over residues 642 to 654 the composition is skewed to basic and acidic residues; that stretch reads KKPDPQSSKSEHV. Thr-728 is modified (phosphothreonine). Positions 735 to 757 are disordered; sequence SNPETNTSSQSNTSQEEAEASQS. Ser-743 is subject to Phosphoserine. Ser-797 is subject to Phosphoserine; by AURKA. Ser-806 carries the phosphoserine modification.

This sequence belongs to the SAPAP family. As to quaternary structure, interacts with CDC2. Interacts with the C-terminal proline-rich region of FBXO7. Recruited by FBXO7 to a SCF (SKP1-CUL1-F-box) protein complex in a CDC2/Cyclin B-phosphorylation dependent manner. Interacts with CDH1. Ubiquitinated, leading to its degradation. In terms of processing, decreased phosphorylation levels are associated with the differentiation of intestinal epithelial cells. As to expression, expressed at low levels in normal resting liver. Up-regulated in regenerating liver after partial hepatectomy.

The protein localises to the nucleus. It localises to the cytoplasm. It is found in the cytoskeleton. The protein resides in the spindle. Functionally, potential cell cycle regulator that may play a role in carcinogenesis of cancer cells. Mitotic phosphoprotein regulated by the ubiquitin-proteasome pathway. Key regulator of adherens junction integrity and differentiation that may be involved in CDH1-mediated adhesion and signaling in epithelial cells. This is Disks large-associated protein 5 (Dlgap5) from Mus musculus (Mouse).